We begin with the raw amino-acid sequence, 602 residues long: MLPRVTKLNSRLLSLALLGIQIARGAITYQHPDDLPSGVDYDFIVAGGGTAGLVVASRLSENSNWKVLVIEAGPSNKDAFVTRVPGLASTLGAGSPIDWNYTTIPQDGLDGRSLDYPRAKILGGCSTHNGMVYTRGSKDDWNSWAGIIGDQGLGWDSILPAIKKAEKFTQDFTDQSVKGHIDPSVHGFDGKLSVSAAYSNISFNDLLFETTKELNAEFPFKLDMNDGKPIGLGWTQYTIDNHAERSSSATSYLESTGDNVHVLVNTLVTRVLSASGNGTDFRKVEFAVDANSPKKQLEAKKEVIVAGGVIASPQILMNSGIGERKVLQAVGIDTLIDNPSVGKNLSDQGATSVMFDTTLPSTDFDVDAALTEWTNSHTGPLARGARLNHLTFVRLPDDKLNGQDPSSGKNSPHIEFQFAQITPQVPTLGVPKQAPLPAANSYRLLLQLAVVNLYSISRGSISLSDNNPFTYPLIDLNMFKEDIDIAILREGIRSAGRMFSSKAFKNSVNKFVYPPADATSDEDLDAFLRSSTFSYVHGVGTLSMSPKGASWGVVNPDFKVKGTSGLRVVDASVIPHAPAAHTQLPVYAFAEYASALIAKSYN.

The first 25 residues, 1–25, serve as a signal peptide directing secretion; the sequence is MLPRVTKLNSRLLSLALLGIQIARG. The N-linked (GlcNAc...) asparagine glycan is linked to N100. H128 bears the Tele-8alpha-FAD histidine mark. N-linked (GlcNAc...) asparagine glycosylation is found at N200, N277, and N344. The active-site Proton acceptor is the H537. H581 is an active-site residue.

Belongs to the GMC oxidoreductase family. In terms of assembly, monomer. The cofactor is FAD. In terms of processing, N-glycosylated.

The protein resides in the secreted. The enzyme catalyses pyranose + acceptor = pyranos-2-ulose + reduced acceptor.. It catalyses the reaction pyranose + acceptor = pyranos-3-ulose + reduced acceptor.. It carries out the reaction pyranose + acceptor = pyranos-2,3-diulose + reduced acceptor.. The catalysed reaction is a pyranoside + acceptor = a pyranosid-3-ulose + reduced acceptor.. The enzyme catalyses a pyranoside + acceptor = a pyranosid-3,4-diulose + reduced acceptor.. Its function is as follows. Catalyzes the single-oxidation or sequential double oxidation reaction of carbohydrates primarily at carbon-2 and/or carbon-3 with the concomitant reduction of the flavin. The enzyme exhibits a broad sugar substrate specificity, oxidizing different aldopyranoses to the corresponding C-1, C-2, C-3 or C-1,2, C-2,3 and C-3,4 (di)dehydro sugars with substrate-specific regioselectivity. Accepts only a narrow range of electron acceptors such as substituted benzoquinones and complexed metal ions and reacts extremely slowly with O(2) as acceptor. May play a role in the natural recycling of plant matter by oxidizing all major monosaccharides in lignocellulose and by reducing quinone compounds or reactive radical species generated during lignin depolymerization. This chain is Pyranose dehydrogenase 1, found in Leucoagaricus meleagris (Western flat-topped agaric).